Consider the following 680-residue polypeptide: DNA ligase (680 aa).

NAD(+)-binding positions include Asp35–Asp39, Ser84–Leu85, and Glu115. The active-site N6-AMP-lysine intermediate is Lys117. The NAD(+) site is built by Arg138, Glu174, Lys291, and Lys315. Residues Cys419, Cys422, Cys437, and Cys442 each contribute to the Zn(2+) site. In terms of domain architecture, BRCT spans Asn601–Ser680.

Belongs to the NAD-dependent DNA ligase family. LigA subfamily. It depends on Mg(2+) as a cofactor. Requires Mn(2+) as cofactor.

It catalyses the reaction NAD(+) + (deoxyribonucleotide)n-3'-hydroxyl + 5'-phospho-(deoxyribonucleotide)m = (deoxyribonucleotide)n+m + AMP + beta-nicotinamide D-nucleotide.. In terms of biological role, DNA ligase that catalyzes the formation of phosphodiester linkages between 5'-phosphoryl and 3'-hydroxyl groups in double-stranded DNA using NAD as a coenzyme and as the energy source for the reaction. It is essential for DNA replication and repair of damaged DNA. This is DNA ligase from Dehalococcoides mccartyi (strain ATCC BAA-2100 / JCM 16839 / KCTC 5957 / BAV1).